The sequence spans 209 residues: Redox-sensing transcriptional repressor Rex (209 aa).

A DNA-binding region (H-T-H motif) is located at residues 16–55; sequence LYYRFIQNLSLSGKQRVSSAELSEAVKVDSATIRRDFSYF. Residue 90 to 95 participates in NAD(+) binding; it reads GVGNLG.

Belongs to the transcriptional regulatory Rex family. Homodimer.

The protein localises to the cytoplasm. Functionally, modulates transcription in response to changes in cellular NADH/NAD(+) redox state. This is Redox-sensing transcriptional repressor Rex from Bacillus anthracis (strain A0248).